Here is a 948-residue protein sequence, read N- to C-terminus: UvrABC system protein A (948 aa).

ATP is bound at residue 31–38 (GLSGSGKS). Residues 249 to 277 (CPNGHDIGFTELSPRMFSFNSPYGACETC) form a C4-type zinc finger. 2 ABC transporter domains span residues 307–586 (WAGS…KNSL) and 606–934 (GNGS…QYLK). 638-645 (GVSGSGKS) provides a ligand contact to ATP. The segment at 737–763 (CETCEGDGILKIEMHFLPDVYVTCEVC) adopts a C4-type zinc-finger fold.

The protein belongs to the ABC transporter superfamily. UvrA family. As to quaternary structure, forms a heterotetramer with UvrB during the search for lesions.

It is found in the cytoplasm. Functionally, the UvrABC repair system catalyzes the recognition and processing of DNA lesions. UvrA is an ATPase and a DNA-binding protein. A damage recognition complex composed of 2 UvrA and 2 UvrB subunits scans DNA for abnormalities. When the presence of a lesion has been verified by UvrB, the UvrA molecules dissociate. This chain is UvrABC system protein A, found in Leptospira interrogans serogroup Icterohaemorrhagiae serovar copenhageni (strain Fiocruz L1-130).